The chain runs to 71 residues: Omega-conotoxin SO-3 (71 aa).

An N-terminal signal peptide occupies residues 1–22 (MKLTCMVIVAVLLLTACQLITA). The propeptide occupies 23 to 45 (DDSRGTQKHRTLRSKTKLSMSTR). 3 disulfides stabilise this stretch: C46-C61, C53-C65, and C60-C70. C70 carries the post-translational modification Cysteine amide.

The protein belongs to the conotoxin O1 superfamily. Expressed by the venom duct.

The protein resides in the secreted. Omega-conotoxins act at presynaptic membranes, they bind and block voltage-gated calcium channels (Cav). This peptide selectively targets Cav2.2/CACNA1B (IC(50)=160 nM) voltage-gated calcium channels. When tested in mammals, this toxin displays an analgesic potency similar to MVIIA in a range of acute and chronic pain models in rodents, but has less adverse effects (tremor, diminution of spontaneous locomotor activity and bad coordinated locomotion) compared with identical dosages of MVIIA injected intrathecally. In Conus striatus (Striated cone), this protein is Omega-conotoxin SO-3.